The following is a 447-amino-acid chain: tRNA-2-methylthio-N(6)-dimethylallyladenosine synthase (447 aa).

The MTTase N-terminal domain maps to 10–128 (KLFCISTYGC…FPEYLHRVLQ (119 aa)). Residues Cys19, Cys55, Cys89, Cys165, Cys169, and Cys172 each contribute to the [4Fe-4S] cluster site. The Radical SAM core domain maps to 151-382 (RKSDVKAFVT…EAINKKVVIK (232 aa)). The TRAM domain occupies 384–447 (KEYEGKVVEV…PFSLIGEIVE (64 aa)).

Belongs to the methylthiotransferase family. MiaB subfamily. Monomer. The cofactor is [4Fe-4S] cluster.

It localises to the cytoplasm. The enzyme catalyses N(6)-dimethylallyladenosine(37) in tRNA + (sulfur carrier)-SH + AH2 + 2 S-adenosyl-L-methionine = 2-methylsulfanyl-N(6)-dimethylallyladenosine(37) in tRNA + (sulfur carrier)-H + 5'-deoxyadenosine + L-methionine + A + S-adenosyl-L-homocysteine + 2 H(+). Functionally, catalyzes the methylthiolation of N6-(dimethylallyl)adenosine (i(6)A), leading to the formation of 2-methylthio-N6-(dimethylallyl)adenosine (ms(2)i(6)A) at position 37 in tRNAs that read codons beginning with uridine. This is tRNA-2-methylthio-N(6)-dimethylallyladenosine synthase from Clostridium perfringens (strain ATCC 13124 / DSM 756 / JCM 1290 / NCIMB 6125 / NCTC 8237 / Type A).